We begin with the raw amino-acid sequence, 328 residues long: Phosphatidate cytidylyltransferase (328 aa).

The segment covering Ser15–Gly29 has biased composition (polar residues). The disordered stretch occupies residues Ser15–Ser50. The next 7 helical transmembrane spans lie at Ala58–Pro78, Ala103–Thr123, Trp124–Ile144, Ala173–Tyr193, Phe202–Phe222, Gly239–Val259, and Pro263–Val283.

This sequence belongs to the CDS family.

Its subcellular location is the cell membrane. The enzyme catalyses a 1,2-diacyl-sn-glycero-3-phosphate + CTP + H(+) = a CDP-1,2-diacyl-sn-glycerol + diphosphate. Its pathway is phospholipid metabolism; CDP-diacylglycerol biosynthesis; CDP-diacylglycerol from sn-glycerol 3-phosphate: step 3/3. This Mycobacterium tuberculosis (strain CDC 1551 / Oshkosh) protein is Phosphatidate cytidylyltransferase (cdsA).